A 463-amino-acid polypeptide reads, in one-letter code: Vacuolar cation/proton exchanger 1 (463 aa).

The residue at position 2 (A2) is an N-acetylalanine. At 2–68 (AGIVTEPWSV…LKDFLSNLQE (67 aa)) the chain is on the cytoplasmic side. The required for autoinhibitory regulation stretch occupies residues 25–33 (SRELRLGRT). Residues 56-62 (YKGLKDF) are required for interaction with autoinhibitory region. The chain crosses the membrane as a helical span at residues 69-89 (VILGTKLAILFPAIPAAIICT). The interval 87–95 (ICTYCGVSQ) is required for Ca(2+)/H(+) exchange activity. At 90-96 (YCGVSQP) the chain is on the extracellular side. The helical transmembrane segment at 97–116 (WIFGLSLLGLTPLAERVSFL) threads the bilayer. Over 117–127 (TEQLAFYTGPT) the chain is Cytoplasmic. Residues 128–148 (LGGLLNATCGNATELIIAILA) form a helical membrane-spanning segment. A cation selection region spans residues 137 to 172 (GNATELIIAILALTNNKVAVVKYSLLGSILSNLLLV). The Extracellular portion of the chain corresponds to 149–161 (LTNNKVAVVKYSL). Residues 162-182 (LGSILSNLLLVLGTSLFCGGI) traverse the membrane as a helical segment. Over 183-197 (ANIRREQRFDRKQAD) the chain is Cytoplasmic. A helical membrane pass occupies residues 198-218 (VNFFLLLLGFLCHLLPLLVGY). Over 219–238 (LKNGEASAAVLSDMQLSISR) the chain is Extracellular. Residues 239-259 (GFSIVMLISYIAYLVFQLWTH) form a helical membrane-spanning segment. Over 260-281 (RQLFDAQEQEDEYDDDVEQETA) the chain is Cytoplasmic. The chain crosses the membrane as a helical span at residues 282–302 (VISFWSGFAWLVGMTLVIALL). Over 303-325 (SEYVVATIEEASDKWNLSVSFIS) the chain is Extracellular. An N-linked (GlcNAc...) asparagine glycan is attached at N318. A helical membrane pass occupies residues 326 to 346 (IILLPIVGNAAEHAGAVIFAF). The segment at 333–368 (GNAAEHAGAVIFAFKNKLDISLGVALGSATQIGLFV) is cation selection. At 347-360 (KNKLDISLGVALGS) the chain is on the cytoplasmic side. The helical transmembrane segment at 361–381 (ATQIGLFVVPLTIIVAWILGI) threads the bilayer. Residues 382 to 384 (NMD) lie on the Extracellular side of the membrane. A helical membrane pass occupies residues 385 to 405 (LNFGPLETGCLAVSIIITAFT). The Cytoplasmic portion of the chain corresponds to 406 to 411 (LQDGSS). Residues 412-432 (HYMKGLVLLLCYFIIAICFFV) traverse the membrane as a helical segment. Residues 433 to 463 (DKLPQKQNAIHLGHQAMNNVVTATGGGVFSS) are Extracellular-facing.

This sequence belongs to the Ca(2+):cation antiporter (CaCA) (TC 2.A.19) family. Cation/proton exchanger (CAX) subfamily. In terms of assembly, interacts with GRXS14 and CXIP4. As to expression, expressed at low levels in leaves, stems and flowers.

It localises to the vacuole membrane. Activated by monothiol glutaredoxin GRXS14 and CXIP4. Inhibited by excess of Ca(2+) and Cd(2+), Na(+) and K(+), but not Mn(2+). In terms of biological role, vacuolar cation/proton exchanger (CAX). Translocates Ca(2+) and other metal ions into vacuoles using the proton gradient formed by H(+)-ATPase and H(+)-pyrophosphatase. Involved in ion homeostasis in association with CAX3. May play a role in cold-acclimation response. The chain is Vacuolar cation/proton exchanger 1 (CAX1) from Arabidopsis thaliana (Mouse-ear cress).